The sequence spans 81 residues: Apolipoprotein C-I, acidic form (81 aa).

A signal peptide spans 1–24; it reads MRLFLSLLVVVLSMVLKGPTPAQG.

This sequence belongs to the apolipoprotein C1 family.

It is found in the secreted. The polypeptide is Apolipoprotein C-I, acidic form (APOC1A) (Macaca fascicularis (Crab-eating macaque)).